The sequence spans 100 residues: NADH-quinone oxidoreductase subunit K (100 aa).

3 helical membrane-spanning segments follow: residues 4 to 24, 28 to 48, and 60 to 80; these read LFHGLFLSLILFILGLTSLIV, ILFILISLEIMMNAVGLALIV, and IMYIFVITLAASEASIALALL.

Belongs to the complex I subunit 4L family. In terms of assembly, NDH-1 is composed of 13 different subunits. Subunits NuoA, H, J, K, L, M, N constitute the membrane sector of the complex.

The protein localises to the cell membrane. The catalysed reaction is a quinone + NADH + 5 H(+)(in) = a quinol + NAD(+) + 4 H(+)(out). Its function is as follows. NDH-1 shuttles electrons from NADH, via FMN and iron-sulfur (Fe-S) centers, to quinones in the respiratory chain. The immediate electron acceptor for the enzyme in this species is believed to be ubiquinone. Couples the redox reaction to proton translocation (for every two electrons transferred, four hydrogen ions are translocated across the cytoplasmic membrane), and thus conserves the redox energy in a proton gradient. The sequence is that of NADH-quinone oxidoreductase subunit K from Buchnera aphidicola subsp. Acyrthosiphon pisum (strain 5A).